A 177-amino-acid chain; its full sequence is ATP-dependent protease subunit HslV (177 aa).

The active site involves Thr5. Na(+) is bound by residues Gly161, Cys164, and Thr167.

This sequence belongs to the peptidase T1B family. HslV subfamily. In terms of assembly, a double ring-shaped homohexamer of HslV is capped on each side by a ring-shaped HslU homohexamer. The assembly of the HslU/HslV complex is dependent on binding of ATP.

The protein localises to the cytoplasm. The catalysed reaction is ATP-dependent cleavage of peptide bonds with broad specificity.. Allosterically activated by HslU binding. Its function is as follows. Protease subunit of a proteasome-like degradation complex believed to be a general protein degrading machinery. This Campylobacter concisus (strain 13826) protein is ATP-dependent protease subunit HslV.